A 365-amino-acid chain; its full sequence is DNA replication and repair protein RecF (365 aa).

ATP is bound at residue G30–T37.

The protein belongs to the RecF family.

The protein resides in the cytoplasm. Functionally, the RecF protein is involved in DNA metabolism; it is required for DNA replication and normal SOS inducibility. RecF binds preferentially to single-stranded, linear DNA. It also seems to bind ATP. This Alkaliphilus oremlandii (strain OhILAs) (Clostridium oremlandii (strain OhILAs)) protein is DNA replication and repair protein RecF.